The primary structure comprises 226 residues: 3-dehydroquinate dehydratase (226 aa).

Residues 29 to 31 (EFR) and Arg-56 each bind 3-dehydroquinate. The Proton donor/acceptor role is filled by His-120. Lys-146 serves as the catalytic Schiff-base intermediate with substrate. Positions 187, 208, and 212 each coordinate 3-dehydroquinate.

This sequence belongs to the type-I 3-dehydroquinase family. Homodimer.

The catalysed reaction is 3-dehydroquinate = 3-dehydroshikimate + H2O. It functions in the pathway metabolic intermediate biosynthesis; chorismate biosynthesis; chorismate from D-erythrose 4-phosphate and phosphoenolpyruvate: step 3/7. Involved in the third step of the chorismate pathway, which leads to the biosynthesis of aromatic amino acids. Catalyzes the cis-dehydration of 3-dehydroquinate (DHQ) and introduces the first double bond of the aromatic ring to yield 3-dehydroshikimate. This chain is 3-dehydroquinate dehydratase, found in Halobacterium salinarum (strain ATCC 700922 / JCM 11081 / NRC-1) (Halobacterium halobium).